Consider the following 399-residue polypeptide: Elongation factor Tu (399 aa).

A tr-type G domain is found at 10–204 (KPHVNIGTIG…AVDTSIPEPE (195 aa)). Positions 19-26 (GHVDHGKT) are G1. 19-26 (GHVDHGKT) is a GTP binding site. Residue Thr-26 coordinates Mg(2+). Residues 60–64 (GITIN) are G2. Residues 81–84 (DCPG) are G3. Residues 81-85 (DCPGH) and 136-139 (NKCD) contribute to the GTP site. A G4 region spans residues 136–139 (NKCD). A G5 region spans residues 174–176 (SGL).

It belongs to the TRAFAC class translation factor GTPase superfamily. Classic translation factor GTPase family. EF-Tu/EF-1A subfamily. As to quaternary structure, monomer.

It localises to the cytoplasm. It catalyses the reaction GTP + H2O = GDP + phosphate + H(+). GTP hydrolase that promotes the GTP-dependent binding of aminoacyl-tRNA to the A-site of ribosomes during protein biosynthesis. This chain is Elongation factor Tu, found in Prochlorococcus marinus (strain MIT 9303).